Reading from the N-terminus, the 1203-residue chain is Regulator of telomere elongation helicase 1 (1203 aa).

Residues 7 to 296 (NGVTVDFPFQ…ARVTQQGELQ (290 aa)) form the Helicase ATP-binding domain. Residue 42-49 (SPTGTGKT) coordinates ATP. [4Fe-4S] cluster contacts are provided by C145, C163, C172, and C207. A Nuclear localization signal motif is present at residues 151 to 167 (KKQESNHMQISLCRKKV). Positions 250-253 (DEAH) match the DEAH box motif. Residues 871–877 (QKGGRKK) carry the Nuclear localization signal motif. Disordered regions lie at residues 998 to 1020 (QLDP…TSKG) and 1120 to 1203 (TTGK…RSKQ). Residues 1004-1020 (HLNQGQPHLSAHPTSKG) show a composition bias toward polar residues. Residues 1123–1134 (KDLELEGPRDES) are compositionally biased toward basic and acidic residues. A PIP-box motif is present at residues 1160-1167 (QSKISSFF). The segment covering 1169–1181 (QRPDESVRSDDTT) has biased composition (basic and acidic residues).

Belongs to the helicase family. RAD3/XPD subfamily. As to quaternary structure, interacts with TERF1. Interacts (via PIP-box) with PCNA; the interaction is direct and essential for suppressing telomere fragility. Interacts with MMS19; the interaction mediates the association of RTEL1 with the cytosolic iron-sulfur protein assembly (CIA) complex. In terms of tissue distribution, widely expressed. Expressed in spleen, thymus, Peyer patches, kidney, and intestine. Not expressed in brain, heart, lung, skeletal muscles, skin and white fat. In the adult gonad, it is highly expressed in the testis, mainly in the spermatogonia and meiotic spermatocytes.

The protein localises to the nucleus. The enzyme catalyses ATP + H2O = ADP + phosphate + H(+). Its function is as follows. A probable ATP-dependent DNA helicase implicated in telomere-length regulation, DNA repair and the maintenance of genomic stability. Acts as an anti-recombinase to counteract toxic recombination and limit crossover during meiosis. Regulates meiotic recombination and crossover homeostasis by physically dissociating strand invasion events and thereby promotes noncrossover repair by meiotic synthesis dependent strand annealing (SDSA) as well as disassembly of D loop recombination intermediates. Also disassembles T loops and prevents telomere fragility by counteracting telomeric G4-DNA structures, which together ensure the dynamics and stability of the telomere. This Mus musculus (Mouse) protein is Regulator of telomere elongation helicase 1.